A 77-amino-acid polypeptide reads, in one-letter code: Apelin (77 aa).

Residues 1–22 form the signal peptide; sequence MNLRLCVQALLLLWLSLTAVCG. Residues 23–41 constitute a propeptide that is removed on maturation; the sequence is VPLMLPPDGTGLEEGSMRY. The disordered stretch occupies residues 46 to 77; that stretch reads RTSRTGPGAWQGGRRKFRRQRPRLSHKGPMPF. Residues 58-71 are compositionally biased toward basic residues; sequence GRRKFRRQRPRLSH.

It belongs to the apelin family. Several active peptides may be produced by proteolytic processing of the peptide precursor. In terms of tissue distribution, expressed in extraembryonic visceral endoderm and in the primitive streak at 6.5 and 7.5 dpc. Expressed in the anterior visceral yolk sac at 8.25 dpc. Expressed weakly in the embryonic heart at 11.5 dpc. Expressed in the adult heart. Expressed in endothelial cells and cardiomyocytes and weakly expressed in fibroblasts.

Its subcellular location is the secreted. The protein localises to the extracellular space. Its function is as follows. Peptide hormone that functions as endogenous ligand for the G-protein-coupled apelin receptor (APLNR/APJ). Functions as a balanced agonist activating both G(i) protein pathway and beta-arrestin pathway of APLNR. Downstream G proteins activation, apelin can inhibit cAMP production and activate key intracellular effectors such as ERKs. On the other hand, APLNR activation induces beta-arrestin recruitment to the membrane leading to desensitization and internalization of the receptor. Apelin also blunts mechanical stretch-induced hypertrophic induction from APLNR. Apelin-36 dissociates more hardly than (pyroglu)apelin-13 from APLNR. Involved in the regulation of cardiac precursor cell movements during gastrulation and heart morphogenesis. Has an inhibitory effect on cytokine production in response to T-cell receptor/CD3 cross-linking; the oral intake of apelin in the colostrum and the milk might therefore modulate immune responses in neonates. Plays a role in early coronary blood vessels formation. Mediates myocardial contractility in an ERK1/2-dependent manner. May also have a role in the central control of body fluid homeostasis by influencing vasopressin release and drinking behavior. This Mus musculus (Mouse) protein is Apelin.